A 652-amino-acid polypeptide reads, in one-letter code: ATP-dependent zinc metalloprotease FtsH 2 (652 aa).

Topologically, residues 1-6 are cytoplasmic; that stretch reads MNKYRR. A helical transmembrane segment spans residues 7-27; the sequence is GLALGALALAVFILIGVGISM. Over 28–108 the chain is Extracellular; the sequence is RATPQPVNLT…PAGNGAISAD (81 aa). Residues 109–129 form a helical membrane-spanning segment; it reads LMLLLRILTIVAVGVVIFVLF. Over 130–652 the chain is Cytoplasmic; it reads RRFGPSSIGT…RAAKPQIDRT (523 aa). 200-207 contacts ATP; sequence GPPGTGKT. Zn(2+) is bound at residue His420. The active site involves Glu421. Zn(2+) contacts are provided by His424 and Asp496.

The protein in the central section; belongs to the AAA ATPase family. This sequence in the C-terminal section; belongs to the peptidase M41 family. Homohexamer. The cofactor is Zn(2+).

The protein resides in the cell membrane. Its function is as follows. Acts as a processive, ATP-dependent zinc metallopeptidase for both cytoplasmic and membrane proteins. Plays a role in the quality control of integral membrane proteins. In Sphaerobacter thermophilus (strain ATCC 49802 / DSM 20745 / KCCM 41009 / NCIMB 13125 / S 6022), this protein is ATP-dependent zinc metalloprotease FtsH 2.